The sequence spans 354 residues: Uroporphyrinogen decarboxylase (354 aa).

Residues 27 to 31 (RQAGR), Asp77, Tyr154, Ser209, and His327 contribute to the substrate site.

It belongs to the uroporphyrinogen decarboxylase family. Homodimer.

It localises to the cytoplasm. The enzyme catalyses uroporphyrinogen III + 4 H(+) = coproporphyrinogen III + 4 CO2. It participates in porphyrin-containing compound metabolism; protoporphyrin-IX biosynthesis; coproporphyrinogen-III from 5-aminolevulinate: step 4/4. Functionally, catalyzes the decarboxylation of four acetate groups of uroporphyrinogen-III to yield coproporphyrinogen-III. In Shewanella denitrificans (strain OS217 / ATCC BAA-1090 / DSM 15013), this protein is Uroporphyrinogen decarboxylase.